Reading from the N-terminus, the 20-residue chain is Alpha-basrubrin (20 aa).

Basic and acidic residues predominate over residues 1–13; the sequence is GADFQECMKEHSQ. The segment at 1-20 is disordered; sequence GADFQECMKEHSQKQHQHQG.

In terms of biological role, possesses antifungal activity against B.cinerea, M.arachidicola and F.oxysporum but not C.comatus and R.solani. Inhibits HIV-1 reverse transcriptase and cell-free translation. The polypeptide is Alpha-basrubrin (Basella alba (Malabar spinach)).